The sequence spans 58 residues: Large ribosomal subunit protein uL30 (58 aa).

This sequence belongs to the universal ribosomal protein uL30 family. As to quaternary structure, part of the 50S ribosomal subunit.

In Bacteroides thetaiotaomicron (strain ATCC 29148 / DSM 2079 / JCM 5827 / CCUG 10774 / NCTC 10582 / VPI-5482 / E50), this protein is Large ribosomal subunit protein uL30.